The chain runs to 326 residues: Transposase InsH for insertion sequence element IS5Y (326 aa).

It belongs to the transposase 11 family.

Its function is as follows. Involved in the transposition of the insertion sequence IS5. This Escherichia coli (strain K12) protein is Transposase InsH for insertion sequence element IS5Y (insH5).